The following is a 464-amino-acid chain: Propanal dehydrogenase (CoA-propanoylating) (464 aa).

Positions 1-18 (MNTSELETLIRTILSEQL) are targets protein to the BMC.

It belongs to the EutE/PduP family. In terms of assembly, interacts with BMC shell proteins PduA and PduJ, which target this protein to BMC. Interacts with PduQ, probably via the N-terminus of PduQ. Interacts with PduK, probably with its BMC-containing N-terminus.

The protein resides in the bacterial microcompartment. The catalysed reaction is propanal + NAD(+) + CoA = propanoyl-CoA + NADH + H(+). It functions in the pathway polyol metabolism; 1,2-propanediol degradation. In terms of biological role, a CoA-acylating aldehyde dehydrogenase required for optimal 1,2-propanediol (1,2-PD) degradation. Optimizes growth in the bacterial microcompartment (BMC) dedicated to 1,2-PD degradation by minimizing propionaldehyde toxicity. Directly targeted to the BMC. NAD(+) and NADH are regenerated internally within the Pdu BMC by the PduP and PduQ enzymes, which reduce NAD(+) and oxidize NADH respectively, although there must also be cofactor transport across the BMC. Its function is as follows. The 1,2-PD-specific bacterial microcompartment (BMC) concentrates low levels of 1,2-PD catabolic enzymes, concentrates volatile reaction intermediates thus enhancing pathway flux and keeps the level of toxic, mutagenic propionaldehyde low. The polypeptide is Propanal dehydrogenase (CoA-propanoylating) (Salmonella typhimurium (strain LT2 / SGSC1412 / ATCC 700720)).